Consider the following 357-residue polypeptide: Phenylalanine--tRNA ligase alpha subunit (357 aa).

E259 contributes to the Mg(2+) binding site.

It belongs to the class-II aminoacyl-tRNA synthetase family. Phe-tRNA synthetase alpha subunit type 1 subfamily. Tetramer of two alpha and two beta subunits. It depends on Mg(2+) as a cofactor.

It is found in the cytoplasm. The catalysed reaction is tRNA(Phe) + L-phenylalanine + ATP = L-phenylalanyl-tRNA(Phe) + AMP + diphosphate + H(+). This is Phenylalanine--tRNA ligase alpha subunit from Jannaschia sp. (strain CCS1).